Reading from the N-terminus, the 464-residue chain is MANVGKVVQIVGAVLDVKFDSEQSLPNLLNALVIKLGDKEIVAEVAQHIGDDTVRCIAMSATDGLVRGMEVVDTGGPISVPVGDETLGRIFNVLGKPVDGKPAPKSAPKLPIHRPAPAYDELETTAEILETGIKVVDLLAPYLKGGKIGLFGGAGVGKTVLIQELINNIAKQHGGISVFSGVGERTREGNDLYGEMSESGVINKTALVFGQMNEPPGARMRVALTGLTMAEHFRDEQGQDVLLFVDNIFRFTQAGSEVSALLGRMPSAVGYQPTLATEMGALQERITSTKKGSITSVQAVYVPADDLTDPAPATTFSHLDAKTVLSRQISSLGIYPAVDPLESTSRILDPSIVGKEHYEVARGVQSILQRYKELQDIIAILGMDELSDEDKLIVARARKIQRFLSQSFTVAEQFTGNPGQYVPVKETVRGFKEILEGKHDDLPESAFLFVGTIEDAVRKAKGSM.

Gly-152 to Thr-159 provides a ligand contact to ATP.

This sequence belongs to the ATPase alpha/beta chains family. In terms of assembly, F-type ATPases have 2 components, CF(1) - the catalytic core - and CF(0) - the membrane proton channel. CF(1) has five subunits: alpha(3), beta(3), gamma(1), delta(1), epsilon(1). CF(0) has three main subunits: a(1), b(2) and c(9-12). The alpha and beta chains form an alternating ring which encloses part of the gamma chain. CF(1) is attached to CF(0) by a central stalk formed by the gamma and epsilon chains, while a peripheral stalk is formed by the delta and b chains.

The protein localises to the cell membrane. The enzyme catalyses ATP + H2O + 4 H(+)(in) = ADP + phosphate + 5 H(+)(out). In terms of biological role, produces ATP from ADP in the presence of a proton gradient across the membrane. The catalytic sites are hosted primarily by the beta subunits. The polypeptide is ATP synthase subunit beta (Clostridioides difficile (strain 630) (Peptoclostridium difficile)).